Reading from the N-terminus, the 100-residue chain is Large ribosomal subunit protein uL23 (100 aa).

Belongs to the universal ribosomal protein uL23 family. As to quaternary structure, part of the 50S ribosomal subunit. Contacts protein L29, and trigger factor when it is bound to the ribosome.

In terms of biological role, one of the early assembly proteins it binds 23S rRNA. One of the proteins that surrounds the polypeptide exit tunnel on the outside of the ribosome. Forms the main docking site for trigger factor binding to the ribosome. The sequence is that of Large ribosomal subunit protein uL23 from Buchnera aphidicola subsp. Schizaphis graminum (strain Sg).